A 302-amino-acid chain; its full sequence is Ribosomal RNA small subunit methyltransferase A (302 aa).

Residues Asn-27, Leu-29, Gly-54, Glu-75, Asp-100, and Asn-138 each contribute to the S-adenosyl-L-methionine site.

Belongs to the class I-like SAM-binding methyltransferase superfamily. rRNA adenine N(6)-methyltransferase family. RsmA subfamily.

The protein localises to the cytoplasm. The catalysed reaction is adenosine(1518)/adenosine(1519) in 16S rRNA + 4 S-adenosyl-L-methionine = N(6)-dimethyladenosine(1518)/N(6)-dimethyladenosine(1519) in 16S rRNA + 4 S-adenosyl-L-homocysteine + 4 H(+). Specifically dimethylates two adjacent adenosines (A1518 and A1519) in the loop of a conserved hairpin near the 3'-end of 16S rRNA in the 30S particle. May play a critical role in biogenesis of 30S subunits. This is Ribosomal RNA small subunit methyltransferase A from Natranaerobius thermophilus (strain ATCC BAA-1301 / DSM 18059 / JW/NM-WN-LF).